A 315-amino-acid polypeptide reads, in one-letter code: Protein OPG185 (315 aa).

An N-terminal signal peptide occupies residues 1 to 16 (MTRLPILLLLISLVYA). The region spanning 17–121 (TPFPQTSKKI…NDTDKVDYEE (105 aa)) is the Ig-like V-type domain. Topologically, residues 17 to 279 (TPFPQTSKKI…SNYKTKDFVE (263 aa)) are virion surface. A disulfide bridge links Cys34 with Cys103. Asn37, Asn69, Asn112, and Asn161 each carry an N-linked (GlcNAc...) asparagine; by host glycan. A disordered region spans residues 194–213 (TVSATSGESTTDETPEPITD). Asn254 carries an N-linked (GlcNAc...) asparagine; by host glycan. The helical transmembrane segment at 280-303 (IFGITALIILSAVAIFCITYYICN) threads the bilayer. Topologically, residues 304–315 (KRSRKYKTENKV) are intravirion.

The protein belongs to the orthopoxvirus OPG185 family. Heterodimerizes with OPG040. The heterodimer OPG185-OPG040 interacts with components of the entry fusion complex OPG143 and OPG094. Heterodimer with C3/VPC protein; disulfide-linked. Post-translationally, glycosylated; contains phosphate and sulfate-substituted glycans. O-glycosylation is required for hemagglutination and hemadsorption activities of infected cell membranes.

It localises to the virion membrane. It is found in the host membrane. Its function is as follows. Prevents cell to cell fusion by interacting with and directing the viral OPG040 protein on the host plasma membrane. The OPG185-OPG040 complex associates with components of the entry fusion complex (EFC) presumably to avoid superinfection and syncytium formation. Via its interaction with C3/VCP protein, protects the infected cell and probably also the extracellular enveloped virus from complement attack. The protein is Protein OPG185 (OPG185) of Vaccinia virus (strain Copenhagen) (VACV).